Here is a 210-residue protein sequence, read N- to C-terminus: Cyclin-U1-1 (210 aa).

Belongs to the cyclin family. Cyclin U/P subfamily. As to quaternary structure, interacts with CDKA-1. Expressed in roots and flowers. Expressed in the shoot apex, leaf primordia and young leaves.

This chain is Cyclin-U1-1 (CYCU1-1), found in Arabidopsis thaliana (Mouse-ear cress).